Consider the following 143-residue polypeptide: Translation initiation factor 2 subunit beta (143 aa).

The protein belongs to the eIF-2-beta/eIF-5 family. In terms of assembly, heterotrimer composed of an alpha, a beta and a gamma chain.

Its function is as follows. eIF-2 functions in the early steps of protein synthesis by forming a ternary complex with GTP and initiator tRNA. This is Translation initiation factor 2 subunit beta (eif2b) from Methanocaldococcus jannaschii (strain ATCC 43067 / DSM 2661 / JAL-1 / JCM 10045 / NBRC 100440) (Methanococcus jannaschii).